Here is a 307-residue protein sequence, read N- to C-terminus: Malate dehydrogenase (307 aa).

Residues 8 to 13 (GAGNVG) and Asp32 each bind NAD(+). Residues Arg81 and Arg87 each coordinate substrate. Residues Asn94 and 117 to 119 (VTN) each bind NAD(+). Asn119 and Arg150 together coordinate substrate. The Proton acceptor role is filled by His174.

This sequence belongs to the LDH/MDH superfamily.

The enzyme catalyses (S)-malate + NAD(+) = oxaloacetate + NADH + H(+). Catalyzes the reversible oxidation of malate to oxaloacetate. The sequence is that of Malate dehydrogenase (mdh) from Methanosarcina acetivorans (strain ATCC 35395 / DSM 2834 / JCM 12185 / C2A).